The sequence spans 651 residues: Maternal embryonic leucine zipper kinase (651 aa).

Residues 11–263 (YELHETIGTG…MKNLLNHPWI (253 aa)) form the Protein kinase domain. ATP contacts are provided by residues 17 to 25 (IGTGGFAKV) and lysine 40. Threonine 56 bears the Phosphothreonine; by autocatalysis mark. The Proton acceptor role is filled by aspartate 132. The residue at position 163 (tyrosine 163) is a Phosphotyrosine; by autocatalysis. The residue at position 167 (threonine 167) is a Phosphothreonine; by autocatalysis. 2 positions are modified to phosphoserine; by autocatalysis: serine 171 and serine 253. The UBA-like stretch occupies residues 282 to 321 (LDDDCVTELSVHHRNNRQTMEDLISLWQYDHLTATYLLLL). The autoinhibitory region stretch occupies residues 326–651 (RGKPVRLRLS…VEDILSSCKV (326 aa)). Residues serine 336, serine 343, and serine 356 each carry the phosphoserine; by autocatalysis modification. Tyrosine 367 bears the Phosphotyrosine mark. Serine 391 is subject to Phosphoserine; by autocatalysis. Threonine 398 carries the phosphothreonine; by autocatalysis modification. Position 407 is a phosphoserine; by autocatalysis (serine 407). A Phosphothreonine modification is found at threonine 409. At serine 431 the chain carries Phosphoserine; by autocatalysis. Phosphothreonine is present on threonine 478. A Phosphothreonine; by autocatalysis modification is found at threonine 494. Serine 498 carries the post-translational modification Phosphoserine. Phosphoserine; by autocatalysis is present on serine 505. Threonine 518 is modified (phosphothreonine). Serine 529 carries the phosphoserine; by autocatalysis modification. At serine 529 the chain carries Phosphoserine. Threonine 539 carries the post-translational modification Phosphothreonine; by autocatalysis. The 50-residue stretch at 602–651 (SDFGKVTMQFELEVCQLQKPDVVGIRRQRLKGDAWVYKRLVEDILSSCKV) folds into the KA1 domain.

The protein belongs to the protein kinase superfamily. CAMK Ser/Thr protein kinase family. SNF1 subfamily. As to quaternary structure, monomer. Interacts with ZNF622 and PPP1R8. Post-translationally, autophosphorylated: autophosphorylation of the T-loop at Thr-167 and Ser-171 is required for activation. Thr-478 phosphorylation during mitosis promotes interaction with PPP1R8. Expressed in placenta, kidney, thymus, testis, ovary and intestine.

It is found in the cell membrane. It carries out the reaction L-tyrosyl-[protein] + ATP = O-phospho-L-tyrosyl-[protein] + ADP + H(+). The enzyme catalyses L-seryl-[protein] + ATP = O-phospho-L-seryl-[protein] + ADP + H(+). It catalyses the reaction L-threonyl-[protein] + ATP = O-phospho-L-threonyl-[protein] + ADP + H(+). Its activity is regulated as follows. Activated by autophosphorylation of the T-loop at Thr-167 and Ser-171: in contrast to other members of the SNF1 subfamily, phosphorylation at Thr-167 is not mediated by STK11/LKB1 but via autophosphorylation instead. Inhibited by calcium-binding. Kinase activity is also regulated by reducing agents: dithiothreitol (DTT) or reduced glutathione are required for kinase activity in vitro; such dependence is however not due to the presence of disulfide bonds. In terms of biological role, serine/threonine-protein kinase involved in various processes such as cell cycle regulation, self-renewal of stem cells, apoptosis and splicing regulation. Has a broad substrate specificity; phosphorylates BCL2L14, CDC25B, MAP3K5/ASK1 and ZNF622. Acts as an activator of apoptosis by phosphorylating and activating MAP3K5/ASK1. Acts as a regulator of cell cycle, notably by mediating phosphorylation of CDC25B, promoting localization of CDC25B to the centrosome and the spindle poles during mitosis. Plays a key role in cell proliferation and carcinogenesis. Required for proliferation of embryonic and postnatal multipotent neural progenitors. Phosphorylates and inhibits BCL2L14, possibly leading to affect mammary carcinogenesis by mediating inhibition of the pro-apoptotic function of BCL2L14. Also involved in the inhibition of spliceosome assembly during mitosis by phosphorylating ZNF622, thereby contributing to its redirection to the nucleus. May also play a role in primitive hematopoiesis. This chain is Maternal embryonic leucine zipper kinase (MELK), found in Homo sapiens (Human).